A 632-amino-acid polypeptide reads, in one-letter code: Probable potassium transport system protein Kup (632 aa).

Helical transmembrane passes span 20–40, 60–80, 111–131, 146–166, 178–198, 216–236, 257–277, 289–309, 347–367, 379–399, 404–424, and 429–449; these read LLVAAVGVVYGDIGTSPLYTL, ILSLILWSLLWVVSFKYVMFI, LMVICGLIGASLFYGDSMITP, FDGIDHWVVPISLVVLVALFL, LFGPIMVTWFVVLAALGVHGI, FFIVHPGMGVAILGAVVLALT, WFALVLPALVLNYFGQGAILL, LLAPGWALLPLVGLATMATVI, IYIAAVNWTLMVGVVLLVIGF, VAVTGTMLMTTILVSAVMLLL, PVLAVPILIGFLLVDGLFFAA, and IVQGGAFPVLAGGVLFLLMST.

The protein belongs to the HAK/KUP transporter (TC 2.A.72) family.

It is found in the cell inner membrane. It carries out the reaction K(+)(in) + H(+)(in) = K(+)(out) + H(+)(out). Transport of potassium into the cell. Likely operates as a K(+):H(+) symporter. This Pseudomonas putida (strain W619) protein is Probable potassium transport system protein Kup.